Consider the following 294-residue polypeptide: Acetylglutamate kinase (294 aa).

Residues 69–70 (GG), Arg-91, and Asn-190 each bind substrate.

This sequence belongs to the acetylglutamate kinase family. ArgB subfamily.

The protein localises to the cytoplasm. The catalysed reaction is N-acetyl-L-glutamate + ATP = N-acetyl-L-glutamyl 5-phosphate + ADP. The protein operates within amino-acid biosynthesis; L-arginine biosynthesis; N(2)-acetyl-L-ornithine from L-glutamate: step 2/4. Its function is as follows. Catalyzes the ATP-dependent phosphorylation of N-acetyl-L-glutamate. This chain is Acetylglutamate kinase, found in Mycobacterium tuberculosis (strain CDC 1551 / Oshkosh).